A 341-amino-acid polypeptide reads, in one-letter code: Anthranilate phosphoribosyltransferase (341 aa).

Residues glycine 84, 87 to 88, threonine 92, 94 to 97, 112 to 120, and serine 124 each bind 5-phospho-alpha-D-ribose 1-diphosphate; these read GD, NIST, and KHGNRSVSS. Residue glycine 84 coordinates anthranilate. Serine 96 contacts Mg(2+). Asparagine 115 serves as a coordination point for anthranilate. Arginine 170 is a binding site for anthranilate. Mg(2+) contacts are provided by aspartate 229 and glutamate 230.

Belongs to the anthranilate phosphoribosyltransferase family. As to quaternary structure, homodimer. It depends on Mg(2+) as a cofactor.

It catalyses the reaction N-(5-phospho-beta-D-ribosyl)anthranilate + diphosphate = 5-phospho-alpha-D-ribose 1-diphosphate + anthranilate. Its pathway is amino-acid biosynthesis; L-tryptophan biosynthesis; L-tryptophan from chorismate: step 2/5. Functionally, catalyzes the transfer of the phosphoribosyl group of 5-phosphorylribose-1-pyrophosphate (PRPP) to anthranilate to yield N-(5'-phosphoribosyl)-anthranilate (PRA). The protein is Anthranilate phosphoribosyltransferase of Polynucleobacter necessarius subsp. necessarius (strain STIR1).